The chain runs to 348 residues: Alcohol dehydrogenase 2 (348 aa).

Zn(2+)-binding residues include Cys-44, His-67, Cys-98, Cys-101, Cys-104, Cys-112, and Cys-154. Residues 178 to 184, Asp-202, Lys-207, 269 to 271, and Arg-341 each bind NAD(+); these read GAAGGLG and VGL.

The protein belongs to the zinc-containing alcohol dehydrogenase family. Homotetramer. Requires Zn(2+) as cofactor.

It is found in the cytoplasm. The catalysed reaction is a primary alcohol + NAD(+) = an aldehyde + NADH + H(+). It catalyses the reaction a secondary alcohol + NAD(+) = a ketone + NADH + H(+). The protein is Alcohol dehydrogenase 2 (ADH2) of Candida albicans (strain SC5314 / ATCC MYA-2876) (Yeast).